Here is a 162-residue protein sequence, read N- to C-terminus: Early E1A 18 kDa protein (162 aa).

Positions 134-162 (EEPTEGVAENSLKRQADSSLCSSSPKRFC) are disordered. The span at 150-162 (DSSLCSSSPKRFC) shows a compositional bias: polar residues.

The protein is Early E1A 18 kDa protein of Tree shrew adenovirus serotype 1 (TSAdV-1).